We begin with the raw amino-acid sequence, 132 residues long: Small ribosomal subunit protein uS8 (132 aa).

This sequence belongs to the universal ribosomal protein uS8 family. Part of the 30S ribosomal subunit. Contacts proteins S5 and S12.

One of the primary rRNA binding proteins, it binds directly to 16S rRNA central domain where it helps coordinate assembly of the platform of the 30S subunit. This is Small ribosomal subunit protein uS8 from Micrococcus luteus (strain ATCC 4698 / DSM 20030 / JCM 1464 / CCM 169 / CCUG 5858 / IAM 1056 / NBRC 3333 / NCIMB 9278 / NCTC 2665 / VKM Ac-2230) (Micrococcus lysodeikticus).